Consider the following 249-residue polypeptide: 5-amino-6-(5-phospho-D-ribitylamino)uracil phosphatase YcsE (249 aa).

Aspartate 16 serves as the catalytic Nucleophile. Aspartate 16 is a binding site for Mg(2+). Methionine 17 contacts phosphate. Aspartate 18 serves as a coordination point for Mg(2+). Phosphate contacts are provided by residues 50–51 (TG) and lysine 177. Residues aspartate 200 and serine 201 each coordinate Mg(2+). Asparagine 203 contributes to the phosphate binding site.

The protein belongs to the HAD-like hydrolase superfamily. Cof family. Mg(2+) serves as cofactor.

The enzyme catalyses 5-amino-6-(5-phospho-D-ribitylamino)uracil + H2O = 5-amino-6-(D-ribitylamino)uracil + phosphate. Its pathway is cofactor biosynthesis; riboflavin biosynthesis; 5-amino-6-(D-ribitylamino)uracil from GTP: step 4/4. Catalyzes the dephosphorylation of the riboflavin precursor 5-amino-6-(5-phospho-D-ribitylamino)uracil and of flavin mononucleotide (FMN) in vitro. To a lesser extent, may also catalyze the dephosphorylation of a broad range of substrates such as phosphorylated sugars and triphosphate nucleotides in vitro. This is 5-amino-6-(5-phospho-D-ribitylamino)uracil phosphatase YcsE (ycsE) from Bacillus subtilis (strain 168).